Consider the following 432-residue polypeptide: Selenocysteine lyase (432 aa).

The residue at position 1 (Met1) is an N-acetylmethionine. The interval Met1 to Val20 is disordered. Ser117 carries the phosphoserine modification. Residue Lys247 is modified to N6-(pyridoxal phosphate)lysine. Cys375 acts as the S-selanylcysteine intermediate in catalysis.

Belongs to the class-V pyridoxal-phosphate-dependent aminotransferase family. As to quaternary structure, homodimer. Requires pyridoxal 5'-phosphate as cofactor.

The protein resides in the cytoplasm. It is found in the cytosol. It catalyses the reaction L-selenocysteine + AH2 = hydrogenselenide + L-alanine + A + H(+). In terms of biological role, catalyzes the decomposition of L-selenocysteine to L-alanine and elemental selenium. In Rattus norvegicus (Rat), this protein is Selenocysteine lyase (Scly).